We begin with the raw amino-acid sequence, 188 residues long: dCTP deaminase (188 aa).

Residues 111 to 116 (KSTYAR), 135 to 137 (TLE), Q156, Y170, and Q180 contribute to the dCTP site. E137 serves as the catalytic Proton donor/acceptor.

The protein belongs to the dCTP deaminase family. Homotrimer.

It catalyses the reaction dCTP + H2O + H(+) = dUTP + NH4(+). The protein operates within pyrimidine metabolism; dUMP biosynthesis; dUMP from dCTP (dUTP route): step 1/2. Functionally, catalyzes the deamination of dCTP to dUTP. This chain is dCTP deaminase, found in Dichelobacter nodosus (strain VCS1703A).